The sequence spans 438 residues: V-type ATP synthase beta chain (438 aa).

It belongs to the ATPase alpha/beta chains family.

Produces ATP from ADP in the presence of a proton gradient across the membrane. The V-type beta chain is a regulatory subunit. The protein is V-type ATP synthase beta chain of Chlamydia abortus (strain DSM 27085 / S26/3) (Chlamydophila abortus).